The chain runs to 185 residues: Ribosome-recycling factor (185 aa).

Belongs to the RRF family.

The protein localises to the cytoplasm. Its function is as follows. Responsible for the release of ribosomes from messenger RNA at the termination of protein biosynthesis. May increase the efficiency of translation by recycling ribosomes from one round of translation to another. The polypeptide is Ribosome-recycling factor (Bacillus pumilus (strain SAFR-032)).